Here is a 263-residue protein sequence, read N- to C-terminus: Endonuclease 8 (263 aa).

Pro2 functions as the Schiff-base intermediate with DNA in the catalytic mechanism. Glu3 serves as the catalytic Proton donor. The active-site Proton donor; for beta-elimination activity is Lys53. Residues Gln70, Arg125, and Asn169 each contribute to the DNA site. The FPG-type zinc-finger motif lies at 229–263; sequence KVFHRDGEACERCGGIIEKTTLSSRPFYWCPHCQK. The active-site Proton donor; for delta-elimination activity is Arg253.

The protein belongs to the FPG family. Zn(2+) is required as a cofactor.

It catalyses the reaction 2'-deoxyribonucleotide-(2'-deoxyribose 5'-phosphate)-2'-deoxyribonucleotide-DNA = a 3'-end 2'-deoxyribonucleotide-(2,3-dehydro-2,3-deoxyribose 5'-phosphate)-DNA + a 5'-end 5'-phospho-2'-deoxyribonucleoside-DNA + H(+). Involved in base excision repair of DNA damaged by oxidation or by mutagenic agents. Acts as a DNA glycosylase that recognizes and removes damaged bases. Has a preference for oxidized pyrimidines, such as thymine glycol, 5,6-dihydrouracil and 5,6-dihydrothymine. Has AP (apurinic/apyrimidinic) lyase activity and introduces nicks in the DNA strand. Cleaves the DNA backbone by beta-delta elimination to generate a single-strand break at the site of the removed base with both 3'- and 5'-phosphates. The chain is Endonuclease 8 from Salmonella dublin (strain CT_02021853).